Reading from the N-terminus, the 425-residue chain is [Pyruvate dehydrogenase (acetyl-transferring)] kinase, mitochondrial (425 aa).

His178 is subject to Phosphohistidine; by autocatalysis. In terms of domain architecture, Histidine kinase spans 180 to 418 (NVAVEIALDI…DVYIHLNRLC (239 aa)). Residues 296 to 303 (EILKNSLR), Asp336, 355 to 356 (TT), and 379 to 384 (GFGFGL) each bind ATP.

The protein belongs to the PDK/BCKDK protein kinase family.

Its subcellular location is the mitochondrion matrix. The catalysed reaction is L-seryl-[pyruvate dehydrogenase E1 alpha subunit] + ATP = O-phospho-L-seryl-[pyruvate dehydrogenase E1 alpha subunit] + ADP + H(+). Functionally, inhibits the mitochondrial pyruvate dehydrogenase complex by phosphorylation of the E1 alpha subunit, thus contributing to the regulation of glucose metabolism. This chain is [Pyruvate dehydrogenase (acetyl-transferring)] kinase, mitochondrial (pkp1), found in Schizosaccharomyces pombe (strain 972 / ATCC 24843) (Fission yeast).